We begin with the raw amino-acid sequence, 526 residues long: Aspartate ammonia-lyase (526 aa).

Residues 1–44 (MSKTSNKSSADSKNDAKAEDIVNGENQIATNESQSSDSAAVSER) are disordered. Basic and acidic residues predominate over residues 10–20 (ADSKNDAKAED). Residues 24 to 39 (GENQIATNESQSSDSA) show a composition bias toward polar residues. Residues T155, S194, T195, N196, and T241 each coordinate L-aspartate. An SS loop region spans residues 371-380 (GSSIMPAKVN). The active-site Proton acceptor is S372. The L-aspartate site is built by S373 and K378.

The protein belongs to the class-II fumarase/aspartase family. Aspartase subfamily. In terms of assembly, homotetramer.

It catalyses the reaction L-aspartate = fumarate + NH4(+). Its function is as follows. Catalyzes the reversible conversion of L-aspartate to fumarate and ammonia. The sequence is that of Aspartate ammonia-lyase from Corynebacterium glutamicum (strain ATCC 13032 / DSM 20300 / JCM 1318 / BCRC 11384 / CCUG 27702 / LMG 3730 / NBRC 12168 / NCIMB 10025 / NRRL B-2784 / 534).